Consider the following 476-residue polypeptide: Cytosolic iron-sulfur assembly component 3 (476 aa).

Position 2 is an N-acetylalanine (alanine 2). Residues cysteine 24, cysteine 71, cysteine 74, cysteine 77, cysteine 190, cysteine 246, cysteine 395, and cysteine 399 each contribute to the [4Fe-4S] cluster site.

The protein belongs to the NARF family. In terms of assembly, external component of the CIA complex. In the CIA complex, interacts directly with CIAO1 and MMS19.

Its function is as follows. Component of the cytosolic iron-sulfur protein assembly (CIA) complex, a multiprotein complex that mediates the incorporation of iron-sulfur cluster into extramitochondrial Fe/S proteins. Seems to negatively regulate the level of HIF1A expression, although this effect could be indirect. The protein is Cytosolic iron-sulfur assembly component 3 of Pongo abelii (Sumatran orangutan).